Consider the following 264-residue polypeptide: Ribosome-recycling factor, mitochondrial (264 aa).

The protein belongs to the RRF family.

The protein resides in the mitochondrion. Necessary for protein synthesis in mitochondria. Functions as a ribosome recycling factor in mitochondria. The protein is Ribosome-recycling factor, mitochondrial (RRF1) of Yarrowia lipolytica (strain CLIB 122 / E 150) (Yeast).